The chain runs to 526 residues: UDP-N-acetylmuramoyl-L-alanyl-D-glutamate--2,6-diaminopimelate ligase (526 aa).

Residues L48 and S50 each contribute to the UDP-N-acetyl-alpha-D-muramoyl-L-alanyl-D-glutamate site. 136–142 is a binding site for ATP; the sequence is GTSGKTT. Residues 178-179, S205, and R213 contribute to the UDP-N-acetyl-alpha-D-muramoyl-L-alanyl-D-glutamate site; that span reads TT. The residue at position 245 (K245) is an N6-carboxylysine. Meso-2,6-diaminopimelate-binding positions include R408, 432–435, G490, and E494; that span reads DNPR. A Meso-diaminopimelate recognition motif motif is present at residues 432–435; it reads DNPR.

This sequence belongs to the MurCDEF family. MurE subfamily. The cofactor is Mg(2+). In terms of processing, carboxylation is probably crucial for Mg(2+) binding and, consequently, for the gamma-phosphate positioning of ATP.

Its subcellular location is the cytoplasm. It catalyses the reaction UDP-N-acetyl-alpha-D-muramoyl-L-alanyl-D-glutamate + meso-2,6-diaminopimelate + ATP = UDP-N-acetyl-alpha-D-muramoyl-L-alanyl-gamma-D-glutamyl-meso-2,6-diaminopimelate + ADP + phosphate + H(+). Its pathway is cell wall biogenesis; peptidoglycan biosynthesis. Functionally, catalyzes the addition of meso-diaminopimelic acid to the nucleotide precursor UDP-N-acetylmuramoyl-L-alanyl-D-glutamate (UMAG) in the biosynthesis of bacterial cell-wall peptidoglycan. This is UDP-N-acetylmuramoyl-L-alanyl-D-glutamate--2,6-diaminopimelate ligase from Corynebacterium efficiens (strain DSM 44549 / YS-314 / AJ 12310 / JCM 11189 / NBRC 100395).